Here is a 241-residue protein sequence, read N- to C-terminus: Probable xyloglucan-specific endo-beta-1,4-glucanase A (241 aa).

A signal peptide spans 1–15 (MKVLALSALLSLASA). Asn-47 carries N-linked (GlcNAc...) asparagine glycosylation.

This sequence belongs to the glycosyl hydrolase 12 (cellulase H) family.

It localises to the secreted. It carries out the reaction xyloglucan + H2O = xyloglucan oligosaccharides.. Catalyzes endohydrolysis of 1,4-beta-D-glucosidic linkages in xyloglucan with retention of the beta-configuration of the glycosyl residues. Specific for xyloglucan and does not hydrolyze other cell wall components. In Aspergillus niger (strain ATCC MYA-4892 / CBS 513.88 / FGSC A1513), this protein is Probable xyloglucan-specific endo-beta-1,4-glucanase A (xgeA).